The following is a 367-amino-acid chain: tRNA(Ile)-lysidine synthase, chloroplastic (367 aa).

64–69 contacts ATP; sequence SGGQDS.

It belongs to the tRNA(Ile)-lysidine synthase family.

It localises to the plastid. The protein resides in the chloroplast. The enzyme catalyses cytidine(34) in tRNA(Ile2) + L-lysine + ATP = lysidine(34) in tRNA(Ile2) + AMP + diphosphate + H(+). Ligates lysine onto the cytidine present at position 34 of the AUA codon-specific tRNA(Ile) that contains the anticodon CAU, in an ATP-dependent manner. Cytidine is converted to lysidine, thus changing the amino acid specificity of the tRNA from methionine to isoleucine. This is tRNA(Ile)-lysidine synthase, chloroplastic from Nephroselmis olivacea (Green alga).